The sequence spans 231 residues: 2-C-methyl-D-erythritol 4-phosphate cytidylyltransferase (231 aa).

This sequence belongs to the IspD/TarI cytidylyltransferase family. IspD subfamily.

The enzyme catalyses 2-C-methyl-D-erythritol 4-phosphate + CTP + H(+) = 4-CDP-2-C-methyl-D-erythritol + diphosphate. It functions in the pathway isoprenoid biosynthesis; isopentenyl diphosphate biosynthesis via DXP pathway; isopentenyl diphosphate from 1-deoxy-D-xylulose 5-phosphate: step 2/6. Catalyzes the formation of 4-diphosphocytidyl-2-C-methyl-D-erythritol from CTP and 2-C-methyl-D-erythritol 4-phosphate (MEP). This chain is 2-C-methyl-D-erythritol 4-phosphate cytidylyltransferase, found in Mycobacterium bovis (strain BCG / Pasteur 1173P2).